Here is a 244-residue protein sequence, read N- to C-terminus: Prolactin-7D1 (244 aa).

An N-terminal signal peptide occupies residues 1–30 (MLPSLIQPCSSGTLLMLLMSNLFLWEKVSS). 2 disulfides stabilise this stretch: Cys-99/Cys-215 and Cys-232/Cys-240.

This sequence belongs to the somatotropin/prolactin family.

It localises to the secreted. The protein is Prolactin-7D1 (Prl7d1) of Mus musculus (Mouse).